The primary structure comprises 519 residues: Maturase K (519 aa).

This sequence belongs to the intron maturase 2 family. MatK subfamily.

It localises to the plastid. The protein resides in the chloroplast. Functionally, usually encoded in the trnK tRNA gene intron. Probably assists in splicing its own and other chloroplast group II introns. This Dioscorea elephantipes (Elephant's foot yam) protein is Maturase K.